We begin with the raw amino-acid sequence, 152 residues long: Large ribosomal subunit protein bL9 (152 aa).

The protein belongs to the bacterial ribosomal protein bL9 family.

Its function is as follows. Binds to the 23S rRNA. This is Large ribosomal subunit protein bL9 from Prochlorococcus marinus (strain NATL1A).